Here is a 420-residue protein sequence, read N- to C-terminus: Diphosphomevalonate decarboxylase 2 (420 aa).

25–28 (YWGK) is a binding site for (R)-5-diphosphomevalonate. The Peroxisomal targeting signal PTS2 signature appears at 42-50 (SVTLDPDHL). (R)-5-diphosphomevalonate-binding positions include R80, 163-168 (SGSACR), and T219.

It belongs to the diphosphomevalonate decarboxylase family. Homodimer.

Its subcellular location is the peroxisome. The enzyme catalyses (R)-5-diphosphomevalonate + ATP = isopentenyl diphosphate + ADP + phosphate + CO2. The protein operates within isoprenoid biosynthesis; isopentenyl diphosphate biosynthesis via mevalonate pathway; isopentenyl diphosphate from (R)-mevalonate: step 3/3. Functionally, performs the first committed step in the biosynthesis of isoprene-containing compounds such as sterols and terpenoids. Component of the triterpenes (e.g. ginsenosides or panaxosides) and phytosterols biosynthetic pathways. Promotes the accumulation of stigmasterol and beta-sitosterol. The chain is Diphosphomevalonate decarboxylase 2 from Panax ginseng (Korean ginseng).